We begin with the raw amino-acid sequence, 157 residues long: Transcription elongation factor GreA (157 aa).

Positions Thr-10–Lys-76 form a coiled coil.

Belongs to the GreA/GreB family.

Its function is as follows. Necessary for efficient RNA polymerase transcription elongation past template-encoded arresting sites. The arresting sites in DNA have the property of trapping a certain fraction of elongating RNA polymerases that pass through, resulting in locked ternary complexes. Cleavage of the nascent transcript by cleavage factors such as GreA or GreB allows the resumption of elongation from the new 3'terminus. GreA releases sequences of 2 to 3 nucleotides. The polypeptide is Transcription elongation factor GreA (Bacillus velezensis (strain DSM 23117 / BGSC 10A6 / LMG 26770 / FZB42) (Bacillus amyloliquefaciens subsp. plantarum)).